Here is a 483-residue protein sequence, read N- to C-terminus: Cysteine--tRNA ligase (483 aa).

Cys-27 lines the Zn(2+) pocket. Positions Ile-29–His-39 match the 'HIGH' region motif. Zn(2+) contacts are provided by Cys-208, His-231, and Glu-235. The short motif at Lys-263–Ser-267 is the 'KMSKS' region element. Residue Lys-266 participates in ATP binding.

Belongs to the class-I aminoacyl-tRNA synthetase family. As to quaternary structure, monomer. Zn(2+) serves as cofactor.

The protein resides in the cytoplasm. It catalyses the reaction tRNA(Cys) + L-cysteine + ATP = L-cysteinyl-tRNA(Cys) + AMP + diphosphate. In Desulfovibrio desulfuricans (strain ATCC 27774 / DSM 6949 / MB), this protein is Cysteine--tRNA ligase.